A 176-amino-acid polypeptide reads, in one-letter code: Pituitary adenylate cyclase-activating polypeptide (176 aa).

An N-terminal signal peptide occupies residues 1–24; sequence MTMCSGARLALLVYGILMHSSVYG. The propeptide occupies 25 to 80; the sequence is SPAASGLRFPGIRPENEVYDEDGNPQQDFYDSESLGVGSPASALRDAYALYYPAEE. Residues 98 to 135 form a disordered region; it reads QPSARRSPADAHGQGLGWDPGGSADDDSEPLSKRHSDG. Residues 150 to 158 form an important for receptor binding region; the sequence is VKKYLAAVL. Position 158 is a leucine amide (leucine 158). Lysine amide is present on lysine 169. Positions 173 to 176 are excised as a propeptide; sequence IPYL.

This sequence belongs to the glucagon family. In terms of assembly, interacts with ADCYAP1R1 (via N-terminal extracellular domain); both PACAP27 and PACAP38 neuropeptides function as ligand for the ADCYAP1R1 receptor, which modulates the activity of downstream effectors. Interacts with VIPR1 and VIPR2; functions as ligand for VIPR1 and VIPR2 receptors, which modulate the activity of downstream effectors.

Its subcellular location is the secreted. In terms of biological role, PACAP is a neuropeptide involved in diverse array of physiological processes through activating the PACAP subfamily of class B1 G protein-coupled receptors: VIP receptor 1 (VIPR1), VIP receptor 2 (VIPR2), and PACAP type I receptor (ADCYAP1R1). Exerts neuroprotective and general cytoprotective effects due to anti-apoptotic, anti-inflammatory, and antioxidant actions. Promotes neuron projection development through the RAPGEF2/Rap1/B-Raf/ERK pathway. In chromaffin cells, induces long-lasting increase of intracellular calcium concentrations and neuroendocrine secretion. Involved in the control of glucose homeostasis, induces insulin secretion by pancreatic beta cells. PACAP exists in two bioactive forms from proteolysis of the same precursor protein, PACAP27 and PACAP38, which differ by eleven amino acid residues in the C-terminus. In Bos taurus (Bovine), this protein is Pituitary adenylate cyclase-activating polypeptide (ADCYAP1).